The sequence spans 278 residues: uncharacterized protein (278 aa).

This is an uncharacterized protein from Schizosaccharomyces pombe (strain 972 / ATCC 24843) (Fission yeast).